A 451-amino-acid polypeptide reads, in one-letter code: Chromosomal replication initiator protein DnaA (451 aa).

The domain I, interacts with DnaA modulators stretch occupies residues 1-101 (MTENETIFWN…TSNHIFSRQT (101 aa)). The segment at 101–110 (TINSLPAITS) is domain II. A domain III, AAA+ region region spans residues 111-329 (DLNPKYSFDN…GALKDISLVA (219 aa)). ATP is bound by residues Gly155, Gly157, Lys158, and Thr159. Residues 330 to 451 (NFKEIDKITV…EIETIKNKIK (122 aa)) are domain IV, binds dsDNA.

The protein belongs to the DnaA family. In terms of assembly, oligomerizes as a right-handed, spiral filament on DNA at oriC.

It is found in the cytoplasm. Its function is as follows. Plays an essential role in the initiation and regulation of chromosomal replication. ATP-DnaA binds to the origin of replication (oriC) to initiate formation of the DNA replication initiation complex once per cell cycle. Binds the DnaA box (a 9 base pair repeat at the origin) and separates the double-stranded (ds)DNA. Forms a right-handed helical filament on oriC DNA; dsDNA binds to the exterior of the filament while single-stranded (ss)DNA is stabiized in the filament's interior. The ATP-DnaA-oriC complex binds and stabilizes one strand of the AT-rich DNA unwinding element (DUE), permitting loading of DNA polymerase. After initiation quickly degrades to an ADP-DnaA complex that is not apt for DNA replication. Binds acidic phospholipids. The protein is Chromosomal replication initiator protein DnaA of Streptococcus uberis (strain ATCC BAA-854 / 0140J).